We begin with the raw amino-acid sequence, 436 residues long: Probable 4-aminobutyrate aminotransferase (436 aa).

An N6-(pyridoxal phosphate)lysine modification is found at Lys281.

It belongs to the class-III pyridoxal-phosphate-dependent aminotransferase family. Pyridoxal 5'-phosphate is required as a cofactor.

It carries out the reaction 4-aminobutanoate + 2-oxoglutarate = succinate semialdehyde + L-glutamate. The catalysed reaction is (S)-3-amino-2-methylpropanoate + 2-oxoglutarate = 2-methyl-3-oxopropanoate + L-glutamate. Its pathway is amino-acid degradation; 4-aminobutanoate degradation. This Bacillus subtilis (strain 168) protein is Probable 4-aminobutyrate aminotransferase (gabT).